The chain runs to 115 residues: Na(+)/H(+) antiporter subunit C1 (115 aa).

3 helical membrane passes run 1 to 21, 28 to 48, and 72 to 92; these read MEIIMIFVSGILTSISVYLVL, IIMGTTLLTHAANLFLITMGG, and LILTAIVIAFATTAFFLVLAF.

Belongs to the CPA3 antiporters (TC 2.A.63) subunit C family. In terms of assembly, may form a heterooligomeric complex that consists of seven subunits: mnhA1, mnhB1, mnhC1, mnhD1, mnhE1, mnhF1 and mnhG1.

It localises to the cell membrane. Its function is as follows. Mnh complex is a Na(+)/H(+) antiporter involved in Na(+) excretion. This chain is Na(+)/H(+) antiporter subunit C1 (mnhC1), found in Staphylococcus epidermidis (strain ATCC 35984 / DSM 28319 / BCRC 17069 / CCUG 31568 / BM 3577 / RP62A).